A 156-amino-acid polypeptide reads, in one-letter code: Small ribosomal subunit protein uS7 (156 aa).

This sequence belongs to the universal ribosomal protein uS7 family. In terms of assembly, part of the 30S ribosomal subunit. Contacts proteins S9 and S11.

Its function is as follows. One of the primary rRNA binding proteins, it binds directly to 16S rRNA where it nucleates assembly of the head domain of the 30S subunit. Is located at the subunit interface close to the decoding center, probably blocks exit of the E-site tRNA. This chain is Small ribosomal subunit protein uS7, found in Polynucleobacter necessarius subsp. necessarius (strain STIR1).